The sequence spans 279 residues: Diaminopimelate epimerase (279 aa).

Substrate contacts are provided by N11 and N63. The active-site Proton donor is C72. Substrate is bound by residues 73–74, N161, N194, and 212–213; these read GN and ER. Residue C221 is the Proton acceptor of the active site. 222–223 contacts substrate; the sequence is GT.

The protein belongs to the diaminopimelate epimerase family. Homodimer.

The protein resides in the cytoplasm. The catalysed reaction is (2S,6S)-2,6-diaminopimelate = meso-2,6-diaminopimelate. Its pathway is amino-acid biosynthesis; L-lysine biosynthesis via DAP pathway; DL-2,6-diaminopimelate from LL-2,6-diaminopimelate: step 1/1. Catalyzes the stereoinversion of LL-2,6-diaminopimelate (L,L-DAP) to meso-diaminopimelate (meso-DAP), a precursor of L-lysine and an essential component of the bacterial peptidoglycan. The protein is Diaminopimelate epimerase of Moorella thermoacetica (strain ATCC 39073 / JCM 9320).